The chain runs to 263 residues: Hydroxyacylglutathione hydrolase (263 aa).

7 residues coordinate Zn(2+): H55, H57, D59, H60, H117, D134, and H172.

Belongs to the metallo-beta-lactamase superfamily. Glyoxalase II family. In terms of assembly, monomer. It depends on Zn(2+) as a cofactor.

It carries out the reaction an S-(2-hydroxyacyl)glutathione + H2O = a 2-hydroxy carboxylate + glutathione + H(+). Its pathway is secondary metabolite metabolism; methylglyoxal degradation; (R)-lactate from methylglyoxal: step 2/2. Thiolesterase that catalyzes the hydrolysis of S-D-lactoyl-glutathione to form glutathione and D-lactic acid. The protein is Hydroxyacylglutathione hydrolase of Shewanella baltica (strain OS185).